Here is a 295-residue protein sequence, read N- to C-terminus: Glycine N-acyltransferase-like protein Keg1 (295 aa).

The residue at position 41 (K41) is an N6-acetyllysine; alternate. An N6-succinyllysine; alternate modification is found at K41. Residue K43 is modified to N6-acetyllysine. K48 is modified (N6-acetyllysine; alternate). K48 carries the N6-succinyllysine; alternate modification. N6-acetyllysine is present on residues K80 and K83. An N6-acetyllysine; alternate mark is found at K124, K128, and K140. N6-succinyllysine; alternate is present on residues K124, K128, and K140. The residue at position 150 (K150) is an N6-acetyllysine. K255 carries the post-translational modification N6-acetyllysine; alternate. K255 carries the N6-succinyllysine; alternate modification.

Belongs to the glycine N-acyltransferase family. In terms of assembly, binds to microtubules. As to expression, specifically expressed in kidney and liver. Up-regulated in the regenerating liver as well as in hepatocellular carcinoma.

The protein localises to the cytoplasm. It localises to the cytoskeleton. Its subcellular location is the microtubule organizing center. It is found in the centrosome. It catalyses the reaction an acyl-CoA + glycine = an N-acylglycine + CoA + H(+). Its function is as follows. Acyltransferase which transfers the acyl group to the N-terminus of glycine. Can conjugate a multitude of substrates to form a variety of N-acylglycines. The sequence is that of Glycine N-acyltransferase-like protein Keg1 (Keg1) from Rattus norvegicus (Rat).